Consider the following 177-residue polypeptide: Protein OPG036 (177 aa).

Belongs to the poxviridae OPG036 family.

The protein localises to the host nucleus. Its function is as follows. Plays a role in the inhibition of host innate immune response. Within the host nucleus, inhibits activation of interferon-beta promoter by inhibiting IRF3 activation. The sequence is that of Protein OPG036 (OPG036) from Homo sapiens (Human).